Reading from the N-terminus, the 421-residue chain is Core-capsid bridging protein (421 aa).

This sequence belongs to the adenoviridae core-capsid bridging protein family. In terms of assembly, monomer. Homodimer. Exists in equilibrium between monomers and dimers in solution. Interacts with the histone-like nucleoprotein; this interactions bridge the virus core to the capsid. Interacts with core protein X; this interactions bridge the virus core to the capsid. Interacts with the endosome lysis protein VI; this interactions bridge the virus core to the capsid. Interacts with the peripentonal hexons. Interacts with host NPM1; this interaction might play a role in virus assembly.

The protein resides in the virion. The protein localises to the host nucleus. It is found in the host nucleolus. In terms of biological role, associates loosely with the viral DNA to form an outer shell around the nucleoprotein-DNA complex and links it with the capsid by binding the endosome lysis protein. Dissociates from the viral genome during entry. Might be involved in nuclear capsid assembly of the viral particles through its association with NPM1/nucleophosmin. This Canine adenovirus serotype 1 (strain RI261) (CAdV-1) protein is Core-capsid bridging protein.